Consider the following 145-residue polypeptide: D-aminoacyl-tRNA deacylase (145 aa).

The short motif at 137–138 (GP) is the Gly-cisPro motif, important for rejection of L-amino acids element.

It belongs to the DTD family. Homodimer.

Its subcellular location is the cytoplasm. It carries out the reaction glycyl-tRNA(Ala) + H2O = tRNA(Ala) + glycine + H(+). The enzyme catalyses a D-aminoacyl-tRNA + H2O = a tRNA + a D-alpha-amino acid + H(+). An aminoacyl-tRNA editing enzyme that deacylates mischarged D-aminoacyl-tRNAs. Also deacylates mischarged glycyl-tRNA(Ala), protecting cells against glycine mischarging by AlaRS. Acts via tRNA-based rather than protein-based catalysis; rejects L-amino acids rather than detecting D-amino acids in the active site. By recycling D-aminoacyl-tRNA to D-amino acids and free tRNA molecules, this enzyme counteracts the toxicity associated with the formation of D-aminoacyl-tRNA entities in vivo and helps enforce protein L-homochirality. The protein is D-aminoacyl-tRNA deacylase of Lactobacillus delbrueckii subsp. bulgaricus (strain ATCC 11842 / DSM 20081 / BCRC 10696 / JCM 1002 / NBRC 13953 / NCIMB 11778 / NCTC 12712 / WDCM 00102 / Lb 14).